Consider the following 406-residue polypeptide: Glutamyl-tRNA reductase (406 aa).

Substrate contacts are provided by residues 51 to 54 (TCNR), Ser-101, 106 to 108 (ESE), and Gln-112. Catalysis depends on Cys-52, which acts as the Nucleophile. NADP(+) is bound at residue 180–185 (GAGSIG).

This sequence belongs to the glutamyl-tRNA reductase family. In terms of assembly, homodimer.

The catalysed reaction is (S)-4-amino-5-oxopentanoate + tRNA(Glu) + NADP(+) = L-glutamyl-tRNA(Glu) + NADPH + H(+). Its pathway is porphyrin-containing compound metabolism; protoporphyrin-IX biosynthesis; 5-aminolevulinate from L-glutamyl-tRNA(Glu): step 1/2. Its function is as follows. Catalyzes the NADPH-dependent reduction of glutamyl-tRNA(Glu) to glutamate 1-semialdehyde (GSA). The sequence is that of Glutamyl-tRNA reductase from Caldivirga maquilingensis (strain ATCC 700844 / DSM 13496 / JCM 10307 / IC-167).